Here is a 34-residue protein sequence, read N- to C-terminus: Photosystem II reaction center protein M (34 aa).

A helical membrane pass occupies residues 7–27 (GFVASLLFVLVPTVFLIILFI).

It belongs to the PsbM family. As to quaternary structure, PSII is composed of 1 copy each of membrane proteins PsbA, PsbB, PsbC, PsbD, PsbE, PsbF, PsbH, PsbI, PsbJ, PsbK, PsbL, PsbM, PsbT, PsbX, PsbY, PsbZ, Psb30/Ycf12, peripheral proteins PsbO, CyanoQ (PsbQ), PsbU, PsbV and a large number of cofactors. It forms dimeric complexes.

It localises to the cellular thylakoid membrane. One of the components of the core complex of photosystem II (PSII). PSII is a light-driven water:plastoquinone oxidoreductase that uses light energy to abstract electrons from H(2)O, generating O(2) and a proton gradient subsequently used for ATP formation. It consists of a core antenna complex that captures photons, and an electron transfer chain that converts photonic excitation into a charge separation. This subunit is found at the monomer-monomer interface. This chain is Photosystem II reaction center protein M, found in Synechococcus sp. (strain WH7803).